We begin with the raw amino-acid sequence, 266 residues long: 2-C-methyl-D-erythritol 4-phosphate cytidylyltransferase (266 aa).

The disordered stretch occupies residues 229–266; the sequence is NRDCGPGTRDPESAHPQSSVSASAFSGPGSRAPGPEEI. Polar residues predominate over residues 243-252; it reads HPQSSVSASA.

The protein belongs to the IspD/TarI cytidylyltransferase family. IspD subfamily.

It carries out the reaction 2-C-methyl-D-erythritol 4-phosphate + CTP + H(+) = 4-CDP-2-C-methyl-D-erythritol + diphosphate. It functions in the pathway isoprenoid biosynthesis; isopentenyl diphosphate biosynthesis via DXP pathway; isopentenyl diphosphate from 1-deoxy-D-xylulose 5-phosphate: step 2/6. Functionally, catalyzes the formation of 4-diphosphocytidyl-2-C-methyl-D-erythritol from CTP and 2-C-methyl-D-erythritol 4-phosphate (MEP). This is 2-C-methyl-D-erythritol 4-phosphate cytidylyltransferase from Xanthomonas axonopodis pv. citri (strain 306).